Consider the following 1482-residue polypeptide: Cystic fibrosis transmembrane conductance regulator (1482 aa).

Topologically, residues 1-77 (MQRSPLEKAS…KLINALRRCF (77 aa)) are cytoplasmic. Residues 78-98 (FWRFTFYGIILYLGEVTKAVQ) form a helical membrane-spanning segment. Residues 81–365 (FTFYGIILYL…WAVQTWYDSL (285 aa)) enclose the ABC transmembrane type-1 1 domain. Residues 99–122 (PLLLGRIIASYDPDNKVERSIAIY) are Extracellular-facing. The chain crosses the membrane as a helical span at residues 123–146 (LAVGLCLLFVVRTLLLHPAIFGLH). At 147–195 (HIGMQMRIAMFSLIYKKTLKLSSRVLDKISIGQLVSLLSNNLNKFDEGL) the chain is on the cytoplasmic side. Residues 196–216 (ALAHFVWIAPLQVTLLMGLLW) form a helical membrane-spanning segment. The Extracellular segment spans residues 217–222 (DLLQAS). A helical membrane pass occupies residues 223 to 243 (AFSGLGVLIILACFQAGFGRM). The Cytoplasmic segment spans residues 244–298 (MMKYRDQRAGKINERLVITSEMIENIQSVKAYCWEEALEKMIENFRQSELRLTRK). The chain crosses the membrane as a helical span at residues 299-319 (AAYVRYFNSSAFFFSGFFVVF). Topologically, residues 320–339 (LSVLPYALIKGIILRKIFTT) are extracellular. The helical transmembrane segment at 340–358 (ISFCIVLRMAVTRQFPWAV) threads the bilayer. The Cytoplasmic segment spans residues 359–859 (QTWYDSLGAI…YLRYITVHKR (501 aa)). ATP is bound by residues Trp401, Ser434, 458 to 465 (GSTGAGKT), and Gln493. The ABC transporter 1 domain maps to 423–646 (NVDNSLFFSN…RPDFSSKLMG (224 aa)). The S-palmitoyl cysteine moiety is linked to residue Cys524. A phosphoserine mark is found at Ser549 and Ser660. The interval 654–832 (SAERRNSIIT…EEINEEDLKE (179 aa)) is disordered R region. Phosphoserine; by PKA is present on Ser670. Ser686 is modified (phosphoserine). Residue Lys688 forms a Glycyl lysine isopeptide (Lys-Gly) (interchain with G-Cter in ubiquitin) linkage. Ser700 and Ser712 each carry phosphoserine. At Thr717 the chain carries Phosphothreonine. Ser737, Ser768, Ser796, and Ser814 each carry phosphoserine. A helical transmembrane segment spans residues 860–880 (LIFVLIWCFVVFLIEVAASLV). Residues 860–1156 (LIFVLIWCFV…AVNSSIDVDS (297 aa)) enclose the ABC transmembrane type-1 2 domain. Topologically, residues 881–919 (LLCLLSKVSPEDKGNTTKSANDSSAVIITSTSSFYFLYI) are extracellular. Asn895 and Asn901 each carry an N-linked (GlcNAc...) asparagine glycan. A discontinuously helical membrane pass occupies residues 920–940 (YVGVADTFLALGLFRGLPLVH). Residues 941-991 (TLITVSKILHHKMLHSVLQAPMSTLNTLKAGGILNRFSKDIAILDDLLPLT) lie on the Cytoplasmic side of the membrane. Residues 992–1012 (IFDFIQLLLIVIGAVAVVSIL) traverse the membrane as a helical segment. Topologically, residues 1013 to 1014 (KP) are extracellular. A helical membrane pass occupies residues 1015-1035 (YIFLATVPVIVAFVLLRAYFL). Topologically, residues 1036–1096 (HTSQQLKQLE…TANWFLYLST (61 aa)) are cytoplasmic. Residues 1097 to 1117 (LRWFQMRIEMIFVIFFIAVTF) traverse the membrane as a helical segment. Residues 1118 to 1131 (ISILTTGEGEGTVG) lie on the Extracellular side of the membrane. The helical transmembrane segment at 1132–1152 (IILTLAMNIMSTLQWAVNSSI) threads the bilayer. Residues 1153–1482 (DVDSLMRSVS…TEEEVQDTRL (330 aa)) are Cytoplasmic-facing. Positions 1212–1445 (MTVKDLTAKY…KSLFRQAISP (234 aa)) constitute an ABC transporter 2 domain. Residues Tyr1221 and 1246–1253 (GRTGSGKS) contribute to the ATP site. Residues 1388 to 1482 (RTLKQAFADC…TEEEVQDTRL (95 aa)) are interaction with GORASP2. Cys1397 carries the S-palmitoyl cysteine lipid modification. Residue Ser1446 is modified to Phosphoserine. The tract at residues 1450-1482 (KLFPHQNSGKHKSRSKITALKEETEEEVQDTRL) is disordered. Over residues 1472–1482 (ETEEEVQDTRL) the composition is skewed to acidic residues. The PDZ-binding motif lies at 1480–1482 (TRL).

This sequence belongs to the ABC transporter superfamily. ABCC family. CFTR transporter (TC 3.A.1.202) subfamily. In terms of assembly, monomer; does not require oligomerization for channel activity. May form oligomers in the membrane. Interacts with SLC26A3, SLC26A6 and NHERF1. Interacts with SHANK2. Interacts with MYO6. Interacts (via C-terminus) with GOPC (via PDZ domain); this promotes CFTR internalization and thereby decreases channel activity. Interacts with SLC4A7 through NHERF1. Found in a complex with MYO5B and RAB11A. Interacts with ANO1. Interacts with SLC26A8. Interacts with AHCYL1; the interaction increases CFTR activity. Interacts with CSE1L. The core-glycosylated form interacts with GORASP2 (via PDZ GRASP-type 1 domain) in respone to ER stress. Interacts with MARCHF2; the interaction leads to CFTR ubiqtuitination and degradation. Interacts with ADGRG2. Post-translationally, N-glycosylated. Phosphorylated; cAMP treatment promotes phosphorylation and activates the channel. Dephosphorylation decreases the ATPase activity (in vitro). Phosphorylation at PKA sites activates the channel. Phosphorylation at PKC sites enhances the response to phosphorylation by PKA. Phosphorylated by AMPK; this inhibits channel activity. In terms of processing, ubiquitinated, leading to its degradation in the lysosome. Deubiquitination by USP10 in early endosomes enhances its endocytic recycling to the cell membrane. Ubiquitinated by RNF185 during ER stress. Ubiquitinated by MARCHF2.

It localises to the apical cell membrane. Its subcellular location is the early endosome membrane. The protein resides in the cell membrane. It is found in the recycling endosome membrane. The protein localises to the endoplasmic reticulum membrane. It localises to the nucleus. It catalyses the reaction ATP + H2O + closed Cl(-) channel = ADP + phosphate + open Cl(-) channel.. The enzyme catalyses chloride(in) = chloride(out). It carries out the reaction hydrogencarbonate(in) = hydrogencarbonate(out). The catalysed reaction is ATP + H2O = ADP + phosphate + H(+). Epithelial ion channel that plays an important role in the regulation of epithelial ion and water transport and fluid homeostasis. Mediates the transport of chloride ions across the cell membrane. Possesses an intrinsic ATPase activity and utilizes ATP to gate its channel; the passive flow of anions through the channel is gated by cycles of ATP binding and hydrolysis by the ATP-binding domains. The ion channel is also permeable to HCO(3)(-); selectivity depends on the extracellular chloride concentration. Exerts its function also by modulating the activity of other ion channels and transporters. Contributes to the regulation of the pH and the ion content of the epithelial fluid layer. Modulates the activity of the epithelial sodium channel (ENaC) complex, in part by regulating the cell surface expression of the ENaC complex. May regulate bicarbonate secretion and salvage in epithelial cells by regulating the transporter SLC4A7. Can inhibit the chloride channel activity of ANO1. Plays a role in the chloride and bicarbonate homeostasis during sperm epididymal maturation and capacitation. This is Cystic fibrosis transmembrane conductance regulator from Dasypus novemcinctus (Nine-banded armadillo).